The chain runs to 498 residues: Glycerol kinase (498 aa).

Threonine 12 lines the ADP pocket. ATP is bound by residues threonine 12, threonine 13, and serine 14. A sn-glycerol 3-phosphate-binding site is contributed by threonine 12. Arginine 16 is an ADP binding site. Sn-glycerol 3-phosphate is bound by residues arginine 82, glutamate 83, and tyrosine 134. Glycerol-binding residues include arginine 82, glutamate 83, and tyrosine 134. Histidine 230 carries the post-translational modification Phosphohistidine; by HPr. A sn-glycerol 3-phosphate-binding site is contributed by aspartate 244. Residues aspartate 244 and glutamine 245 each coordinate glycerol. 2 residues coordinate ADP: threonine 266 and glycine 309. Threonine 266, glycine 309, glutamine 313, and glycine 410 together coordinate ATP. The ADP site is built by glycine 410 and asparagine 414.

It belongs to the FGGY kinase family. As to quaternary structure, homotetramer and homodimer (in equilibrium). In terms of processing, the phosphoenolpyruvate-dependent sugar phosphotransferase system (PTS), including enzyme I, and histidine-containing protein (HPr) are required for the phosphorylation, which leads to the activation of the enzyme.

It carries out the reaction glycerol + ATP = sn-glycerol 3-phosphate + ADP + H(+). Its pathway is polyol metabolism; glycerol degradation via glycerol kinase pathway; sn-glycerol 3-phosphate from glycerol: step 1/1. Activated by phosphorylation and inhibited by fructose 1,6-bisphosphate (FBP). In terms of biological role, key enzyme in the regulation of glycerol uptake and metabolism. Catalyzes the phosphorylation of glycerol to yield sn-glycerol 3-phosphate. The chain is Glycerol kinase from Staphylococcus aureus (strain MW2).